The sequence spans 430 residues: Glutamate-1-semialdehyde 2,1-aminomutase (430 aa).

K268 bears the N6-(pyridoxal phosphate)lysine mark.

Belongs to the class-III pyridoxal-phosphate-dependent aminotransferase family. HemL subfamily. In terms of assembly, homodimer. Pyridoxal 5'-phosphate serves as cofactor.

Its subcellular location is the cytoplasm. The enzyme catalyses (S)-4-amino-5-oxopentanoate = 5-aminolevulinate. It participates in porphyrin-containing compound metabolism; protoporphyrin-IX biosynthesis; 5-aminolevulinate from L-glutamyl-tRNA(Glu): step 2/2. This chain is Glutamate-1-semialdehyde 2,1-aminomutase (hemL), found in Bacillus subtilis (strain 168).